A 360-amino-acid chain; its full sequence is Peptide chain release factor 1 (360 aa).

The residue at position 237 (glutamine 237) is an N5-methylglutamine.

This sequence belongs to the prokaryotic/mitochondrial release factor family. Methylated by PrmC. Methylation increases the termination efficiency of RF1.

Its subcellular location is the cytoplasm. Functionally, peptide chain release factor 1 directs the termination of translation in response to the peptide chain termination codons UAG and UAA. This chain is Peptide chain release factor 1, found in Teredinibacter turnerae (strain ATCC 39867 / T7901).